The primary structure comprises 101 residues: Thrombin-like enzyme okinaxobin-1 (101 aa).

The N-terminal stretch at 1-16 (LIRVLANLLILQLSYA) is a signal peptide. Residues 17–22 (QKSSEL) constitute a propeptide that is removed on maturation. Residues 23 to 101 (VIGGDECNIN…PKKKYFFRCR (79 aa)) enclose the Peptidase S1 domain. Cys50 and Cys66 are disulfide-bonded. His65 functions as the Charge relay system in the catalytic mechanism.

The protein belongs to the peptidase S1 family. Snake venom subfamily. Monomer. Glycosylated. Expressed by the venom gland.

The protein localises to the secreted. Strongly inactivated by diisopropylfluorophosphate (DFP) and phenylmethanesulfonyl fluoride (PMSF), and to a lesser extent by tosyl-L-lysine chloromethyl ketone (TLCK). Functionally, thrombin-like snake venom serine protease that releases specifically fibrinopeptide B from fibrinogen (FGB) to form fibrin clots. Shows a preferential cleavage at Arg-|-Gly bonds in fibrinogen beta chains. Cleaves fibrinogen beta chains preferentially to alpha chains. The protein is Thrombin-like enzyme okinaxobin-1 of Ovophis okinavensis (Ryukyu Island pit viper).